The primary structure comprises 570 residues: Peptidyl-prolyl cis-trans isomerase FKBP9 (570 aa).

Residues 1-24 (MAFRGWRPPPPPLLLLLLWVTGQA) form the signal peptide. PPIase FKBP-type domains lie at 54 to 142 (GDFV…MDIW), 166 to 254 (SDFV…LDLH), 278 to 365 (GDFL…IDFH), and 389 to 477 (GDYL…LELV). N-linked (GlcNAc...) asparagine glycosylation is found at N174, N286, N302, and N397. 2 consecutive EF-hand domains span residues 488–523 (WNGE…QVAS) and 533–568 (DAEL…AKHD). Positions 501, 503, 505, 507, 512, 546, 548, 550, 552, and 557 each coordinate Ca(2+). Positions 567–570 (HDEL) match the Prevents secretion from ER motif.

Phosphorylated.

Its subcellular location is the endoplasmic reticulum. It catalyses the reaction [protein]-peptidylproline (omega=180) = [protein]-peptidylproline (omega=0). Its activity is regulated as follows. Inhibited by FK506. Functionally, PPIases accelerate the folding of proteins during protein synthesis. The protein is Peptidyl-prolyl cis-trans isomerase FKBP9 (FKBP9) of Homo sapiens (Human).